Here is a 737-residue protein sequence, read N- to C-terminus: Polyribonucleotide nucleotidyltransferase (737 aa).

Mg(2+) contacts are provided by aspartate 489 and aspartate 495. A KH domain is found at 556-615 (PKIDTIKIDVDKIKIVIGKGGETIDKIIAETGVKIDIDEEGNVSIYSSDQDAINRAKEII). The region spanning 625-693 (DEVYRAKVVR…EKGRIDASMK (69 aa)) is the S1 motif domain. Residues 691–737 (SMKALLPRPPKPEHDEKGEKSERPHRPRHQKDYKPKKEFTETPKDSE) are disordered. The segment covering 700–737 (PKPEHDEKGEKSERPHRPRHQKDYKPKKEFTETPKDSE) has biased composition (basic and acidic residues).

This sequence belongs to the polyribonucleotide nucleotidyltransferase family. Requires Mg(2+) as cofactor.

The protein resides in the cytoplasm. It catalyses the reaction RNA(n+1) + phosphate = RNA(n) + a ribonucleoside 5'-diphosphate. Functionally, involved in mRNA degradation. Catalyzes the phosphorolysis of single-stranded polyribonucleotides processively in the 3'- to 5'-direction. The sequence is that of Polyribonucleotide nucleotidyltransferase from Streptococcus pneumoniae serotype 2 (strain D39 / NCTC 7466).